The following is a 133-amino-acid chain: uncharacterized protein (133 aa).

The segment at 44 to 79 (VENQLASSKTEEQTLKISKKSNLNPAQKSSTFGLEN) is disordered. Polar residues predominate over residues 63-79 (KSNLNPAQKSSTFGLEN).

It is found in the plastid. The protein resides in the chloroplast. This is an uncharacterized protein from Chlorella vulgaris (Green alga).